The sequence spans 317 residues: Olfactory receptor 5AP2 (317 aa).

Over 1–32 (MVRSGKGIQNKNATEVTEFILLGLSDNPDLQG) the chain is Extracellular. Asn-12 carries an N-linked (GlcNAc...) asparagine glycan. The helical transmembrane segment at 33-53 (VLFALFLIIYTMTLVGNLGMM) threads the bilayer. The Cytoplasmic portion of the chain corresponds to 54 to 61 (ALIKIDRS). Residues 62–82 (LHTPMYFFLSSLSFVDASYSS) form a helical membrane-spanning segment. At 83–106 (SVTPKMLVNLMAEDKSISFNGCAT) the chain is on the extracellular side. Cys-104 and Cys-196 are oxidised to a cystine. A helical transmembrane segment spans residues 107–127 (QFFFFGSFLGTECFLLAMMAY). Residues 128 to 140 (DRYAAIWNPLLYP) lie on the Cytoplasmic side of the membrane. Residues 141–161 (VLMSGRICFMLVSTSFLAGFG) form a helical membrane-spanning segment. Residues 162 to 203 (NAAIHTGMTFRLSFCGSNKINHFYCDTPPLLKLSCSDTHING) lie on the Extracellular side of the membrane. The helical transmembrane segment at 204-224 (IVIMAFSSFNVISCVLIVLIS) threads the bilayer. Residues 225 to 244 (YLCILIAILKMPSAEGRHKA) lie on the Cytoplasmic side of the membrane. Residues 245–265 (FSTCASHLMAVTIFFGTILFM) form a helical membrane-spanning segment. Residues 266 to 278 (YLRPTSSYSMEQD) lie on the Extracellular side of the membrane. The helical transmembrane segment at 279-299 (KVVSVFYTVVIPMLNPLIYSL) threads the bilayer. At 300–317 (KNKDVKKAVKKILHNYVV) the chain is on the cytoplasmic side.

Belongs to the G-protein coupled receptor 1 family.

The protein localises to the cell membrane. Odorant receptor. The chain is Olfactory receptor 5AP2 from Mus musculus (Mouse).